Reading from the N-terminus, the 400-residue chain is DNA polymerase IV (400 aa).

The UmuC domain occupies 5-187; it reads IFLVDMNAFF…LPVEFMNGIG (183 aa). Mg(2+) contacts are provided by Asp-9 and Asp-105. Glu-106 is an active-site residue.

This sequence belongs to the DNA polymerase type-Y family. As to quaternary structure, monomer. Requires Mg(2+) as cofactor.

The protein resides in the cytoplasm. It catalyses the reaction DNA(n) + a 2'-deoxyribonucleoside 5'-triphosphate = DNA(n+1) + diphosphate. Its function is as follows. Poorly processive, error-prone DNA polymerase involved in untargeted mutagenesis. Copies undamaged DNA at stalled replication forks, which arise in vivo from mismatched or misaligned primer ends. These misaligned primers can be extended by PolIV. Exhibits no 3'-5' exonuclease (proofreading) activity. May be involved in translesional synthesis, in conjunction with the beta clamp from PolIII. This Clostridium kluyveri (strain ATCC 8527 / DSM 555 / NBRC 12016 / NCIMB 10680 / K1) protein is DNA polymerase IV.